The primary structure comprises 328 residues: MTATKLHKKVILVGDGAVGSSYAFALVNQGIAQELGIIEIPQLFEKAVGDALDLSHALPFTSPKKIYAAKYEDCADADLVVITAGAPQKPGETRLDLVGKNLAINKSIVTQVVESGFNGIFLVAANPVDVLTYSTWKFSGFPKERVIGSGTSLDSARFRQALAEKLNVDARSVHAYIMGEHGDSEFAVWSHANIAGVNLEEFLKDEENVQEAELVELFEGVRDAAYTIINKKGATYYGIAVALARITKAILDDENAVLPLSVFQEGQYGVNNIFIGQPAIVGAHGIVRPVNIPLNDAEQQKMKASADELQAIIDEAWKNPEFQEASKN.

Residues Val-18, Glu-39, Lys-46, Tyr-71, and 85–86 (GA) contribute to the NAD(+) site. 2 residues coordinate substrate: Gln-88 and Arg-94. Residues Ser-107, 124 to 126 (AAN), and Ser-149 contribute to the NAD(+) site. Residue 126–129 (NPVD) participates in substrate binding. 154 to 157 (DSAR) is a substrate binding site. The beta-D-fructose 1,6-bisphosphate site is built by Arg-159 and His-174. The active-site Proton acceptor is His-181. Tyr-226 bears the Phosphotyrosine mark. Substrate is bound at residue Thr-235.

Belongs to the LDH/MDH superfamily. LDH family. Homotetramer.

The protein localises to the cytoplasm. It carries out the reaction (S)-lactate + NAD(+) = pyruvate + NADH + H(+). The protein operates within fermentation; pyruvate fermentation to lactate; (S)-lactate from pyruvate: step 1/1. With respect to regulation, allosterically activated by fructose 1,6-bisphosphate (FBP). Functionally, catalyzes the conversion of lactate to pyruvate. The protein is L-lactate dehydrogenase of Streptococcus thermophilus (strain ATCC BAA-250 / LMG 18311).